The primary structure comprises 102 residues: Thioredoxin (102 aa).

The region spanning 1 to 102 is the Thioredoxin domain; it reads MVKVVSAENF…SLIRLINQHS (102 aa). A disulfide bridge links C28 with C31.

Belongs to the thioredoxin family.

Participates in various redox reactions through the reversible oxidation of its active center dithiol to a disulfide and catalyzes dithiol-disulfide exchange reactions. This is Thioredoxin (trxA) from Chlamydia caviae (strain ATCC VR-813 / DSM 19441 / 03DC25 / GPIC) (Chlamydophila caviae).